Reading from the N-terminus, the 199-residue chain is Ribosome maturation factor RimM (199 aa).

One can recognise a PRC barrel domain in the interval 100-195; the sequence is ADEWYPKDLI…YLTLDPPGGL (96 aa).

It belongs to the RimM family. Binds ribosomal protein uS19.

Its subcellular location is the cytoplasm. Functionally, an accessory protein needed during the final step in the assembly of 30S ribosomal subunit, possibly for assembly of the head region. Essential for efficient processing of 16S rRNA. May be needed both before and after RbfA during the maturation of 16S rRNA. It has affinity for free ribosomal 30S subunits but not for 70S ribosomes. This Bifidobacterium longum (strain DJO10A) protein is Ribosome maturation factor RimM.